The following is a 620-amino-acid chain: MALLQISEPGDSPAPHQRKLAVGIDLGTTNSLVAAVRSSVPEVLADAQGQVLLPSAVRYLDGGAVRIGREALLEQARDPLNTIVSVKRFMGRSAADAAASGAPYEFVDAPGMVRLRTVQGDLSPVEVSAQILAVLRQRAEDVLGDDLVGAVITVPAYFDDAQRQATRDAARLAGLNVLRLLNEPTAAAIAYGLDQAAEGIYAVYDLGGGTFDISILRLTQGVFEVIATGGDTALGGDDFDSAIVAHACAGEDVAALPVADRRALLVAARAAREALTDQAQAPFEVTLRDGRAIQATLTRAQFEQLAEPLVGRTLDSARRALRDAGLAVGDVRGVVMVGGATRMPVVRQQVGALFGTEPLTNLDPDQVVALGAALQANLLAGNRALGEDWLLLDVIPLSLGLETMGGLVERIIPRNSTIPVARAQEFTTFKDGQTAMSVHVVQGERDLVSDCRSLARFELRGIPPMVAGAARIRVTFQVDADGLLSVTAREQSTGVEAAVAVKPSYGLSDDEIARMLADSVTQADSDARARMLREQQVEARQLVESVGAALAADGDLLDPAERATVDQRLQAAAQAQSLDDVEAVRAAVQALSDATEEFAARRMDRSIRSALAGRKLDELA.

Belongs to the heat shock protein 70 family.

Chaperone involved in the maturation of iron-sulfur cluster-containing proteins. Has a low intrinsic ATPase activity which is markedly stimulated by HscB. This Bordetella pertussis (strain Tohama I / ATCC BAA-589 / NCTC 13251) protein is Chaperone protein HscA homolog.